The chain runs to 81 residues: uncharacterized protein (81 aa).

This is an uncharacterized protein from Autographa californica nuclear polyhedrosis virus (AcMNPV).